The sequence spans 379 residues: 3-dehydroquinate synthase (379 aa).

NAD(+)-binding positions include 67-72 (PGEKNK), 101-105 (GIILD), 125-126 (TT), Lys-138, and Lys-147. The Zn(2+) site is built by Glu-180, His-242, and His-258.

Belongs to the sugar phosphate cyclases superfamily. Dehydroquinate synthase family. The cofactor is NAD(+). Co(2+) is required as a cofactor. Requires Zn(2+) as cofactor.

It is found in the cytoplasm. The enzyme catalyses 7-phospho-2-dehydro-3-deoxy-D-arabino-heptonate = 3-dehydroquinate + phosphate. It functions in the pathway metabolic intermediate biosynthesis; chorismate biosynthesis; chorismate from D-erythrose 4-phosphate and phosphoenolpyruvate: step 2/7. Its function is as follows. Catalyzes the conversion of 3-deoxy-D-arabino-heptulosonate 7-phosphate (DAHP) to dehydroquinate (DHQ). The chain is 3-dehydroquinate synthase from Chlamydia caviae (strain ATCC VR-813 / DSM 19441 / 03DC25 / GPIC) (Chlamydophila caviae).